A 111-amino-acid polypeptide reads, in one-letter code: uncharacterized protein (111 aa).

The protein resides in the cytoplasm. The protein localises to the nucleus. This is an uncharacterized protein from Schizosaccharomyces pombe (strain 972 / ATCC 24843) (Fission yeast).